A 550-amino-acid polypeptide reads, in one-letter code: Cochlin (550 aa).

Residues Met1–Ser24 form the signal peptide. Residues Ala28–Phe121 form the LCCL domain. 2 cysteine pairs are disulfide-bonded: Cys34–Cys50 and Cys54–Cys74. N-linked (GlcNAc...) asparagine glycosylation is present at Asn100. The span at Ser128–Ser139 shows a compositional bias: polar residues. A disordered region spans residues Ser128 to Asn159. VWFA domains follow at residues Asp165–Leu346 and Asn367–Val537. Asn221 carries N-linked (GlcNAc...) asparagine glycosylation.

In terms of assembly, monomer. May form homodimer. Interacts with type II collagen. Interacts with SLC44A2. Interacts with ANXA2. N-glycosylated. In terms of processing, a 50 kDa form is created by proteolytic cleavage. In terms of tissue distribution, expressed in inner ear structures; the cochlea and the vestibule.

The protein localises to the secreted. Its subcellular location is the extracellular space. It is found in the extracellular matrix. Functionally, plays a role in the control of cell shape and motility in the trabecular meshwork. This Homo sapiens (Human) protein is Cochlin (COCH).